Reading from the N-terminus, the 393-residue chain is Dual-specificity RNA methyltransferase RlmN (393 aa).

Residue Glu-115 is the Proton acceptor of the active site. Positions 121 to 365 constitute a Radical SAM core domain; the sequence is EEDRGTLCIS…APIRKTRGDD (245 aa). Residues Cys-128 and Cys-370 are joined by a disulfide bond. Positions 135, 139, and 142 each coordinate [4Fe-4S] cluster. S-adenosyl-L-methionine-binding positions include 194–195, Ser-226, 248–250, and Asn-327; these read GE and SFH. The active-site S-methylcysteine intermediate is Cys-370.

It belongs to the radical SAM superfamily. RlmN family. Requires [4Fe-4S] cluster as cofactor.

The protein resides in the cytoplasm. It carries out the reaction adenosine(2503) in 23S rRNA + 2 reduced [2Fe-2S]-[ferredoxin] + 2 S-adenosyl-L-methionine = 2-methyladenosine(2503) in 23S rRNA + 5'-deoxyadenosine + L-methionine + 2 oxidized [2Fe-2S]-[ferredoxin] + S-adenosyl-L-homocysteine. The catalysed reaction is adenosine(37) in tRNA + 2 reduced [2Fe-2S]-[ferredoxin] + 2 S-adenosyl-L-methionine = 2-methyladenosine(37) in tRNA + 5'-deoxyadenosine + L-methionine + 2 oxidized [2Fe-2S]-[ferredoxin] + S-adenosyl-L-homocysteine. In terms of biological role, specifically methylates position 2 of adenine 2503 in 23S rRNA and position 2 of adenine 37 in tRNAs. m2A2503 modification seems to play a crucial role in the proofreading step occurring at the peptidyl transferase center and thus would serve to optimize ribosomal fidelity. This Ruegeria pomeroyi (strain ATCC 700808 / DSM 15171 / DSS-3) (Silicibacter pomeroyi) protein is Dual-specificity RNA methyltransferase RlmN.